We begin with the raw amino-acid sequence, 193 residues long: UMP-CMP kinase (193 aa).

13–18 contributes to the ATP binding site; the sequence is GAGKGT. The NMP stretch occupies residues 33-63; it reads SAGDLLRDERKKPDSQYGELIESYIRDGKIV. A ribonucleoside 5'-phosphate contacts are provided by residues R39, 61–63, and 93–96; these read KIV and GFPR. N100 contributes to the CMP binding site. The segment at 133–143 is LID; it reads ERGKSSGRSDD. R134 serves as a coordination point for ATP. R140 and R151 together coordinate a ribonucleoside 5'-phosphate. K179 is an ATP binding site.

Belongs to the adenylate kinase family. UMP-CMP kinase subfamily. Monomer. Requires Mg(2+) as cofactor.

It is found in the nucleus. The protein localises to the cytoplasm. The enzyme catalyses CMP + ATP = CDP + ADP. The catalysed reaction is dCMP + ATP = dCDP + ADP. It catalyses the reaction UMP + ATP = UDP + ADP. It carries out the reaction a 2'-deoxyribonucleoside 5'-diphosphate + ATP = a 2'-deoxyribonucleoside 5'-triphosphate + ADP. The enzyme catalyses a ribonucleoside 5'-diphosphate + ATP = a ribonucleoside 5'-triphosphate + ADP. In terms of biological role, catalyzes the phosphorylation of pyrimidine nucleoside monophosphates at the expense of ATP. Plays an important role in de novo pyrimidine nucleotide biosynthesis. Has preference for UMP and CMP as phosphate acceptors. Also displays broad nucleoside diphosphate kinase activity. This chain is UMP-CMP kinase (cmpk1), found in Xenopus laevis (African clawed frog).